Here is a 483-residue protein sequence, read N- to C-terminus: Cobyric acid synthase (483 aa).

The GATase cobBQ-type domain maps to 248–434; it reads ALRVVVPVLP…LHGLFEQPSA (187 aa). The Nucleophile role is filled by Cys329. The active site involves His426.

Belongs to the CobB/CobQ family. CobQ subfamily.

It functions in the pathway cofactor biosynthesis; adenosylcobalamin biosynthesis. Functionally, catalyzes amidations at positions B, D, E, and G on adenosylcobyrinic A,C-diamide. NH(2) groups are provided by glutamine, and one molecule of ATP is hydrogenolyzed for each amidation. This is Cobyric acid synthase from Ectopseudomonas mendocina (strain ymp) (Pseudomonas mendocina).